The chain runs to 1176 residues: Condensin complex subunit 1 (1176 aa).

2 positions are modified to phosphoserine: Ser-464 and Ser-475.

This sequence belongs to the CND1 (condensin subunit 1) family. In terms of assembly, component of the condensin complex, which contains the SMC2 and SMC4 heterodimer, and three non SMC subunits that probably regulate the complex: BRN1, YCS4 and YCG1/YCS5.

It is found in the nucleus. The protein localises to the chromosome. Its function is as follows. Regulatory subunit of the condensin complex, a complex required for conversion of interphase chromatin into mitotic-like condense chromosomes. The condensin complex probably introduces positive supercoils into relaxed DNA in the presence of type I topoisomerases and converts nicked DNA into positive knotted forms in the presence of type II topoisomerases. The condensin complex probably also plays a role during interphase. In Saccharomyces cerevisiae (strain ATCC 204508 / S288c) (Baker's yeast), this protein is Condensin complex subunit 1 (YCS4).